Here is a 242-residue protein sequence, read N- to C-terminus: NADH-quinone oxidoreductase subunit C (242 aa).

The tract at residues 67-101 (VVNSVGLGHKEQGAKPITNRRTTSDNVGESKSIDY) is insert.

The protein belongs to the complex I 30 kDa subunit family. As to quaternary structure, NDH-1 is composed of 14 different subunits. Subunits NuoB, C, D, E, F, and G constitute the peripheral sector of the complex.

It localises to the cell inner membrane. The catalysed reaction is a quinone + NADH + 5 H(+)(in) = a quinol + NAD(+) + 4 H(+)(out). Functionally, NDH-1 shuttles electrons from NADH, via FMN and iron-sulfur (Fe-S) centers, to quinones in the respiratory chain. The immediate electron acceptor for the enzyme in this species is believed to be ubiquinone. Couples the redox reaction to proton translocation (for every two electrons transferred, four hydrogen ions are translocated across the cytoplasmic membrane), and thus conserves the redox energy in a proton gradient. This chain is NADH-quinone oxidoreductase subunit C, found in Rickettsia conorii (strain ATCC VR-613 / Malish 7).